The primary structure comprises 462 residues: Na(+)/H(+) antiporter NhaA 2 (462 aa).

A disordered region spans residues 1–31 (MKSSTREQTPVTSPTPHDPTPPTPPRGSTPL). A compositionally biased stretch (pro residues) spans 16–27 (PHDPTPPTPPRG). Helical transmembrane passes span 52–72 (IGGA…NSPW), 96–116 (LTLG…IAGL), 134–154 (LVPV…YVLV), 165–185 (GWAI…AVIS), 195–215 (FLLT…AIFY), 218–238 (TLAV…GLLV), 244–264 (SWWL…ASGI), 309–329 (FAVP…LSGL), 337–357 (VALG…LGAT), 382–402 (LLGG…FGAG), and 408–428 (HVKV…AVVL).

It belongs to the NhaA Na(+)/H(+) (TC 2.A.33) antiporter family.

It localises to the cell membrane. It carries out the reaction Na(+)(in) + 2 H(+)(out) = Na(+)(out) + 2 H(+)(in). Functionally, na(+)/H(+) antiporter that extrudes sodium in exchange for external protons. The polypeptide is Na(+)/H(+) antiporter NhaA 2 (Kineococcus radiotolerans (strain ATCC BAA-149 / DSM 14245 / SRS30216)).